Reading from the N-terminus, the 78-residue chain is Sec-independent protein translocase protein TatA (78 aa).

Residues 4–21 (SFQHILILLVVVLLLFGR) form a helical membrane-spanning segment. The disordered stretch occupies residues 49 to 78 (TAKSDSIKTIDNTGKPTNVQANPQRQDSTV). The segment covering 57 to 78 (TIDNTGKPTNVQANPQRQDSTV) has biased composition (polar residues).

Belongs to the TatA/E family. As to quaternary structure, the Tat system comprises two distinct complexes: a TatABC complex, containing multiple copies of TatA, TatB and TatC subunits, and a separate TatA complex, containing only TatA subunits. Substrates initially bind to the TatABC complex, which probably triggers association of the separate TatA complex to form the active translocon.

It localises to the cell inner membrane. Functionally, part of the twin-arginine translocation (Tat) system that transports large folded proteins containing a characteristic twin-arginine motif in their signal peptide across membranes. TatA could form the protein-conducting channel of the Tat system. In Afipia carboxidovorans (strain ATCC 49405 / DSM 1227 / KCTC 32145 / OM5) (Oligotropha carboxidovorans), this protein is Sec-independent protein translocase protein TatA.